A 365-amino-acid polypeptide reads, in one-letter code: Histidinol-phosphate aminotransferase (365 aa).

K220 bears the N6-(pyridoxal phosphate)lysine mark.

This sequence belongs to the class-II pyridoxal-phosphate-dependent aminotransferase family. Histidinol-phosphate aminotransferase subfamily. In terms of assembly, homodimer. Pyridoxal 5'-phosphate serves as cofactor.

The catalysed reaction is L-histidinol phosphate + 2-oxoglutarate = 3-(imidazol-4-yl)-2-oxopropyl phosphate + L-glutamate. It functions in the pathway amino-acid biosynthesis; L-histidine biosynthesis; L-histidine from 5-phospho-alpha-D-ribose 1-diphosphate: step 7/9. This chain is Histidinol-phosphate aminotransferase (hisC), found in Xylella fastidiosa (strain Temecula1 / ATCC 700964).